Here is a 344-residue protein sequence, read N- to C-terminus: Mycothiol acetyltransferase (344 aa).

Residue glutamate 36 coordinates 1D-myo-inositol 2-(L-cysteinylamino)-2-deoxy-alpha-D-glucopyranoside. N-acetyltransferase domains follow at residues 40 to 179 (LALR…TPLP) and 187 to 344 (VTVR…PSTG). The segment at 61 to 83 (ADTSGPNVPDTPGDQNAADTSTM) is disordered. Positions 73–83 (GDQNAADTSTM) are enriched in polar residues. 109–111 (VVV) contributes to the acetyl-CoA binding site. Glutamate 214, lysine 253, and glutamate 272 together coordinate 1D-myo-inositol 2-(L-cysteinylamino)-2-deoxy-alpha-D-glucopyranoside. Acetyl-CoA contacts are provided by residues 276 to 278 (VGV) and 283 to 289 (GGAGLGR). 1D-myo-inositol 2-(L-cysteinylamino)-2-deoxy-alpha-D-glucopyranoside is bound at residue tyrosine 310. Position 315-320 (315-320 (NVRAVR)) interacts with acetyl-CoA.

Belongs to the acetyltransferase family. MshD subfamily. Monomer.

The enzyme catalyses 1D-myo-inositol 2-(L-cysteinylamino)-2-deoxy-alpha-D-glucopyranoside + acetyl-CoA = mycothiol + CoA + H(+). Catalyzes the transfer of acetyl from acetyl-CoA to desacetylmycothiol (Cys-GlcN-Ins) to form mycothiol. The sequence is that of Mycothiol acetyltransferase from Frankia casuarinae (strain DSM 45818 / CECT 9043 / HFP020203 / CcI3).